The primary structure comprises 557 residues: Putative inactive polypeptide N-acetylgalactosaminyltransferase 11 (557 aa).

The Cytoplasmic segment spans residues methionine 1–leucine 4. Residues leucine 5–tryptophan 27 form a helical; Signal-anchor for type II membrane protein membrane-spanning segment. Residues phenylalanine 28 to histidine 557 are Lumenal-facing. 2 N-linked (GlcNAc...) asparagine glycosylation sites follow: asparagine 33 and asparagine 103. 5 disulfides stabilise this stretch: cysteine 99-cysteine 325, cysteine 316-cysteine 397, cysteine 437-cysteine 450, cysteine 472-cysteine 486, and cysteine 511-cysteine 526. Residues threonine 109 to proline 215 form a catalytic subdomain A region. Asparagine 220 is a glycosylation site (N-linked (GlcNAc...) asparagine). The catalytic subdomain B stretch occupies residues proline 271–lysine 333. Asparagine 379 carries an N-linked (GlcNAc...) asparagine glycan. In terms of domain architecture, Ricin B-type lectin spans glutamate 456–histidine 557.

Belongs to the glycosyltransferase 2 family. GalNAc-T subfamily.

The protein resides in the golgi apparatus membrane. Probable inactive glycosyltransferase. This is Putative inactive polypeptide N-acetylgalactosaminyltransferase 11 from Drosophila melanogaster (Fruit fly).